The chain runs to 577 residues: Outer spore wall assembly protein SHE10 (577 aa).

Positions 1 to 23 (MGKLIKLITTLTVLVSLLQYCCE) are cleaved as a signal peptide. Coiled coils occupy residues 379-416 (NETR…ENVE) and 513-561 (ILRS…EEDV). Over residues 525 to 545 (RERKERERKEREKAAAEEFQR) the composition is skewed to basic and acidic residues. Residues 525 to 577 (RERKERERKEREKAAAEEFQRQQELLRQQEEEDEEDVSYTSTSTITTTTTMTL) are disordered. Over residues 562–577 (SYTSTSTITTTTTMTL) the composition is skewed to low complexity.

The protein belongs to the SHE10 family. Component of the mitochondria-localized RNase mitochondrial RNA-processing (RNase MRP) composed of one single RNA encoded by the NME1 gene and at least 31 proteins. Absent in the nucleus-localized RNase MRP (NuMRP).

The protein localises to the mitochondrion. In terms of biological role, involved in spore wall assembly. May be a component of the mitochondrial RNase MRP (MtMRP), a ribonucleoprotein endoribonuclease involved in the cleaving RNA transcripts to generate primers for DNA replication in mitochondria. The protein is Outer spore wall assembly protein SHE10 of Saccharomyces cerevisiae (strain Lalvin EC1118 / Prise de mousse) (Baker's yeast).